Consider the following 112-residue polypeptide: Seminal vesicle secretory protein 4 (112 aa).

The N-terminal stretch at 1–21 (MKSTSLFLCSLLLLLVTGAIG) is a signal peptide. The interval 26-112 (EKYSQSEEVV…RSRFAQDVLN (87 aa)) is disordered. Composition is skewed to low complexity over residues 36-47 (SESFASGPSSGS) and 85-97 (RSSG…GESS).

The protein belongs to the SVP2/SVP5/SVP6 family. In terms of tissue distribution, testis.

It localises to the secreted. Its subcellular location is the extracellular space. In Rattus norvegicus (Rat), this protein is Seminal vesicle secretory protein 4 (Svs4).